The primary structure comprises 268 residues: MNDMNPGFVMPDVQSSHDTRQIPIQRVGVRGVRYPMSLQTPSGVLSTVGTFNLDVHLPADQKGTHMSRFVALLEEEREPLNLAQFQLLLEKMLEKLEADAGRIEVSFPYFVSKTAPVSGVQSLMDYEVTMIGEVRDGHTTVRVKALVPVTSLCPCSKKISQYGAHNQRSHITIDAELAADTPVEALIRMAEEEASCELWGLLKRPDEKFVTERAYENPKFVEDLVRDIAMRLNEDDRIVAYTLEAENFESIHNHSAYALIERDKRRAG.

It belongs to the GTP cyclohydrolase IV family.

The catalysed reaction is GTP + H2O = 7,8-dihydroneopterin 3'-triphosphate + formate + H(+). Its pathway is cofactor biosynthesis; 7,8-dihydroneopterin triphosphate biosynthesis; 7,8-dihydroneopterin triphosphate from GTP: step 1/1. Converts GTP to 7,8-dihydroneopterin triphosphate. This is GTP cyclohydrolase FolE2 from Ralstonia nicotianae (strain ATCC BAA-1114 / GMI1000) (Ralstonia solanacearum).